Here is a 319-residue protein sequence, read N- to C-terminus: Acetyl-coenzyme A carboxylase carboxyl transferase subunit alpha (319 aa).

The region spanning 35-296 (NIDEEVHRLR…KAQLLADLAD (262 aa)) is the CoA carboxyltransferase C-terminal domain.

This sequence belongs to the AccA family. As to quaternary structure, acetyl-CoA carboxylase is a heterohexamer composed of biotin carboxyl carrier protein (AccB), biotin carboxylase (AccC) and two subunits each of ACCase subunit alpha (AccA) and ACCase subunit beta (AccD).

It is found in the cytoplasm. The catalysed reaction is N(6)-carboxybiotinyl-L-lysyl-[protein] + acetyl-CoA = N(6)-biotinyl-L-lysyl-[protein] + malonyl-CoA. It functions in the pathway lipid metabolism; malonyl-CoA biosynthesis; malonyl-CoA from acetyl-CoA: step 1/1. In terms of biological role, component of the acetyl coenzyme A carboxylase (ACC) complex. First, biotin carboxylase catalyzes the carboxylation of biotin on its carrier protein (BCCP) and then the CO(2) group is transferred by the carboxyltransferase to acetyl-CoA to form malonyl-CoA. The protein is Acetyl-coenzyme A carboxylase carboxyl transferase subunit alpha of Shigella boydii serotype 4 (strain Sb227).